Reading from the N-terminus, the 635-residue chain is MPITPASLSFAEDGTPYSTAYGDVYHSSDGGLGQAHHVFLAGNGLPERWRGRERFVIVETGFGLGLNFLASWAAWRKDPQRSERLHFVSCELHPFRVEDLALLHARWPEFAPLAAELQANWPCLAPGVHRLHLDGGRVCLTLYFGDARDGLAQLDARADAFLLDGFSPAKNPDLWSARIFHLLARLAAADATLATWSVAGEVREGLRRAGFEVEKAPGFGGKRQMLRGRYLGRGHRPAPAAAERRALVIGAGVAGTSIAERLAARGWQVELLDAASGPAQGASGNHAGVLRPLPSLDDNRMGRLTRAGTLYGWRHIQRLQAAGLPLRAEACGVLHLARDAAQEAKMRAVVERLALPPAHLRFVSAAEASEIGGWPVPLGGWWFGDSGWVQPPSLCAANLSAGGEGIRAHWNARVTLARADTRWQARDAQGALLAEAPVAILAAGTGITGFPLAAPLPVVSARGQVSLLPAPAGSAPRVVMCRMGYVSPAVDGLRCAGATFDVGDDDATLRARDHHENLSKLEAMLPGYTAALATQPAEGRVGFRPASPDRLPMVGAVPALTTLAAPCALAEIPRHTGLYALSGFGARGLVWATLAAETLASQLDGEPLPLERDLVDALDPARFLLRPARTLRGED.

Residues 1-231 form a tRNA (mnm(5)s(2)U34)-methyltransferase region; it reads MPITPASLSF…KRQMLRGRYL (231 aa). The FAD-dependent cmnm(5)s(2)U34 oxidoreductase stretch occupies residues 249–635; sequence IGAGVAGTSI…RPARTLRGED (387 aa).

This sequence in the N-terminal section; belongs to the methyltransferase superfamily. tRNA (mnm(5)s(2)U34)-methyltransferase family. In the C-terminal section; belongs to the DAO family. It depends on FAD as a cofactor.

It localises to the cytoplasm. It catalyses the reaction 5-aminomethyl-2-thiouridine(34) in tRNA + S-adenosyl-L-methionine = 5-methylaminomethyl-2-thiouridine(34) in tRNA + S-adenosyl-L-homocysteine + H(+). Its function is as follows. Catalyzes the last two steps in the biosynthesis of 5-methylaminomethyl-2-thiouridine (mnm(5)s(2)U) at the wobble position (U34) in tRNA. Catalyzes the FAD-dependent demodification of cmnm(5)s(2)U34 to nm(5)s(2)U34, followed by the transfer of a methyl group from S-adenosyl-L-methionine to nm(5)s(2)U34, to form mnm(5)s(2)U34. This Azoarcus sp. (strain BH72) protein is tRNA 5-methylaminomethyl-2-thiouridine biosynthesis bifunctional protein MnmC.